A 452-amino-acid polypeptide reads, in one-letter code: Exodeoxyribonuclease 7 large subunit (452 aa).

Belongs to the XseA family. In terms of assembly, heterooligomer composed of large and small subunits.

The protein resides in the cytoplasm. It catalyses the reaction Exonucleolytic cleavage in either 5'- to 3'- or 3'- to 5'-direction to yield nucleoside 5'-phosphates.. Its function is as follows. Bidirectionally degrades single-stranded DNA into large acid-insoluble oligonucleotides, which are then degraded further into small acid-soluble oligonucleotides. The sequence is that of Exodeoxyribonuclease 7 large subunit from Bacillus cereus (strain 03BB102).